The following is a 369-amino-acid chain: Peptide chain release factor 2 (369 aa).

Gln-251 carries the N5-methylglutamine modification.

Belongs to the prokaryotic/mitochondrial release factor family. Post-translationally, methylated by PrmC. Methylation increases the termination efficiency of RF2.

The protein localises to the cytoplasm. Peptide chain release factor 2 directs the termination of translation in response to the peptide chain termination codons UGA and UAA. The protein is Peptide chain release factor 2 (prfB) of Chlamydia muridarum (strain MoPn / Nigg).